A 54-amino-acid chain; its full sequence is ATP synthase F(0) complex subunit 8 (54 aa).

Residues 13–35 form a helical membrane-spanning segment; the sequence is ALSLWVCFPLMMLSLSSFLPLTL.

Belongs to the ATPase protein 8 family. As to quaternary structure, component of the ATP synthase complex composed at least of ATP5F1A/subunit alpha, ATP5F1B/subunit beta, ATP5MC1/subunit c (homooctomer), MT-ATP6/subunit a, MT-ATP8/subunit 8, ATP5ME/subunit e, ATP5MF/subunit f, ATP5MG/subunit g, ATP5MK/subunit k, ATP5MJ/subunit j, ATP5F1C/subunit gamma, ATP5F1D/subunit delta, ATP5F1E/subunit epsilon, ATP5PF/subunit F6, ATP5PB/subunit b, ATP5PD/subunit d, ATP5PO/subunit OSCP. ATP synthase complex consists of a soluble F(1) head domain (subunits alpha(3) and beta(3)) - the catalytic core - and a membrane F(0) domain - the membrane proton channel (subunits c, a, 8, e, f, g, k and j). These two domains are linked by a central stalk (subunits gamma, delta, and epsilon) rotating inside the F1 region and a stationary peripheral stalk (subunits F6, b, d, and OSCP).

Its subcellular location is the mitochondrion membrane. Functionally, subunit 8, of the mitochondrial membrane ATP synthase complex (F(1)F(0) ATP synthase or Complex V) that produces ATP from ADP in the presence of a proton gradient across the membrane which is generated by electron transport complexes of the respiratory chain. ATP synthase complex consist of a soluble F(1) head domain - the catalytic core - and a membrane F(1) domain - the membrane proton channel. These two domains are linked by a central stalk rotating inside the F(1) region and a stationary peripheral stalk. During catalysis, ATP synthesis in the catalytic domain of F(1) is coupled via a rotary mechanism of the central stalk subunits to proton translocation. In vivo, can only synthesize ATP although its ATP hydrolase activity can be activated artificially in vitro. Part of the complex F(0) domain. The sequence is that of ATP synthase F(0) complex subunit 8 from Myxine glutinosa (Atlantic hagfish).